A 616-amino-acid polypeptide reads, in one-letter code: Xaa-Pro aminopeptidase app-1 (616 aa).

The a peptide site is built by Arg78 and His392. The Zn(2+) site is built by Asp413, Asp424, and His487. His487, His496, and Glu522 together coordinate a peptide. Residues Glu522 and Glu536 each coordinate Zn(2+).

Belongs to the peptidase M24B family. In terms of assembly, homodimer. May interact with pid-2, pid-4 and pid-5. Zn(2+) serves as cofactor. In terms of tissue distribution, specifically expressed in the intestine.

It localises to the cytoplasm. The enzyme catalyses Release of any N-terminal amino acid, including proline, that is linked to proline, even from a dipeptide or tripeptide.. Its activity is regulated as follows. Strongly inhibited by the metal ion chelators EDTA and 1,10-phenanthroline. Also inhibited by apstatin. Activity towards bradykinin is inhibited by Mn(2+) and Zn(2+) at all concentrations tested, whereas Co(2+) is inhibitory at concentrations above 100 uM and activatory at 10 uM. Functionally, catalyzes the removal of a penultimate prolyl residue from the N-termini of peptides, such as Arg-Pro-Pro. Has activity towards the flp-9 neuropeptide KPSFVRF-amide. This is Xaa-Pro aminopeptidase app-1 from Caenorhabditis elegans.